Reading from the N-terminus, the 188-residue chain is MKGLIIIGSAQVNSHTSALARYLTEHFKTHDIEAEIFDLAEKPLNQLDFSGTTPSIDEIKQNMKDLKEKAMAADFLILGTPNYHGSYSGILKNALDHLNMDYFKMKPVGLIGNSGGIVSSEPLSHLRVIVRSLLGIAVPTQIATHDSDFAKNEDGSYYLNDSEFQLRARLFVDQIVSFVNNSPYEHLK.

The protein belongs to the azoreductase type 2 family. Homotetramer. FMN is required as a cofactor.

Catalyzes the reductive cleavage of azo bond in aromatic azo compounds to the corresponding amines. Requires NADPH, but not NADH, as an electron donor for its activity. This is FMN-dependent NADPH-azoreductase (azo1) from Staphylococcus aureus (strain MSSA476).